The sequence spans 725 residues: Eukaryotic translation initiation factor 3 subunit B (725 aa).

The RRM domain maps to 46 to 130 (NCVFIAGIPV…HTFTARSFKD (85 aa)). WD repeat units follow at residues 202-240 (RANW…RAHR), 242-280 (AHTN…SLRI), 354-395 (VNIE…SMQR), 462-504 (PLSE…HAPK), 510-552 (DAGV…AKRT), and 554-594 (VIEH…FTFQ).

It belongs to the eIF-3 subunit B family. In terms of assembly, component of the eukaryotic translation initiation factor 3 (eIF-3) complex.

Its subcellular location is the cytoplasm. Its function is as follows. RNA-binding component of the eukaryotic translation initiation factor 3 (eIF-3) complex, which is involved in protein synthesis of a specialized repertoire of mRNAs and, together with other initiation factors, stimulates binding of mRNA and methionyl-tRNAi to the 40S ribosome. The eIF-3 complex specifically targets and initiates translation of a subset of mRNAs involved in cell proliferation. The polypeptide is Eukaryotic translation initiation factor 3 subunit B (Caenorhabditis elegans).